Reading from the N-terminus, the 322-residue chain is UDP-galactose transporter homolog 1 (322 aa).

5 consecutive transmembrane segments (helical) span residues 4 to 24 (FMRQ…SWAV), 43 to 63 (ALLS…WNWF), 76 to 96 (FLGY…FGYA), 105 to 125 (TVIL…VFVY), and 129 to 149 (FPPH…IFSY). N-linked (GlcNAc...) asparagine glycosylation is present at N152. The next 4 membrane-spanning stretches (helical) occupy residues 164–184 (SPIG…TNTT), 199–219 (MMIA…ISPF), 250–270 (LFIF…ITLT), and 290–310 (IQWL…GLKI). 2 N-linked (GlcNAc...) asparagine glycosylation sites follow: N313 and N314.

This sequence belongs to the nucleotide-sugar transporter family. SLC35B subfamily.

It is found in the endoplasmic reticulum membrane. Its function is as follows. May be involved in specific transport of UDP-Gal from the cytosol to the Golgi lumen. Involved in the maintenance of optimal conditions for the folding of secretory pathway proteins in the endoplasmic reticulum. In Schizosaccharomyces pombe (strain 972 / ATCC 24843) (Fission yeast), this protein is UDP-galactose transporter homolog 1 (hut1).